The sequence spans 405 residues: Acetate kinase (405 aa).

A Mg(2+)-binding site is contributed by N7. K14 is an ATP binding site. Residue R99 coordinates substrate. The active-site Proton donor/acceptor is the D156. 215-219 (HLGNG) contributes to the ATP binding site. E391 contributes to the Mg(2+) binding site.

It belongs to the acetokinase family. In terms of assembly, homodimer. Mg(2+) is required as a cofactor. The cofactor is Mn(2+).

It is found in the cytoplasm. The catalysed reaction is acetate + ATP = acetyl phosphate + ADP. The protein operates within metabolic intermediate biosynthesis; acetyl-CoA biosynthesis; acetyl-CoA from acetate: step 1/2. In terms of biological role, catalyzes the formation of acetyl phosphate from acetate and ATP. Can also catalyze the reverse reaction. In Trichormus variabilis (strain ATCC 29413 / PCC 7937) (Anabaena variabilis), this protein is Acetate kinase.